Here is a 303-residue protein sequence, read N- to C-terminus: Ribosomal protein uL3 glutamine methyltransferase (303 aa).

The protein belongs to the protein N5-glutamine methyltransferase family. PrmB subfamily.

The enzyme catalyses L-glutaminyl-[ribosomal protein uL3] + S-adenosyl-L-methionine = N(5)-methyl-L-glutaminyl-[ribosomal protein uL3] + S-adenosyl-L-homocysteine + H(+). Methylates large ribosomal subunit protein uL3 on a specific glutamine residue. This is Ribosomal protein uL3 glutamine methyltransferase from Neisseria meningitidis serogroup B (strain ATCC BAA-335 / MC58).